Consider the following 301-residue polypeptide: Lipoyl synthase (301 aa).

7 residues coordinate [4Fe-4S] cluster: Cys53, Cys58, Cys64, Cys79, Cys83, Cys86, and Ser290. A Radical SAM core domain is found at 65–279; it reads WSRKTATYML…RIYGKSIGFK (215 aa).

The protein belongs to the radical SAM superfamily. Lipoyl synthase family. [4Fe-4S] cluster serves as cofactor.

It localises to the cytoplasm. It carries out the reaction [[Fe-S] cluster scaffold protein carrying a second [4Fe-4S](2+) cluster] + N(6)-octanoyl-L-lysyl-[protein] + 2 oxidized [2Fe-2S]-[ferredoxin] + 2 S-adenosyl-L-methionine + 4 H(+) = [[Fe-S] cluster scaffold protein] + N(6)-[(R)-dihydrolipoyl]-L-lysyl-[protein] + 4 Fe(3+) + 2 hydrogen sulfide + 2 5'-deoxyadenosine + 2 L-methionine + 2 reduced [2Fe-2S]-[ferredoxin]. It participates in protein modification; protein lipoylation via endogenous pathway; protein N(6)-(lipoyl)lysine from octanoyl-[acyl-carrier-protein]: step 2/2. Functionally, catalyzes the radical-mediated insertion of two sulfur atoms into the C-6 and C-8 positions of the octanoyl moiety bound to the lipoyl domains of lipoate-dependent enzymes, thereby converting the octanoylated domains into lipoylated derivatives. The chain is Lipoyl synthase from Leptospira interrogans serogroup Icterohaemorrhagiae serovar Lai (strain 56601).